We begin with the raw amino-acid sequence, 342 residues long: UDP-N-acetylglucosamine--N-acetylmuramyl-(pentapeptide) pyrophosphoryl-undecaprenol N-acetylglucosamine transferase (342 aa).

Residues 10–12, asparagine 124, serine 177, and glutamine 275 contribute to the UDP-N-acetyl-alpha-D-glucosamine site; that span reads TGG.

This sequence belongs to the glycosyltransferase 28 family. MurG subfamily.

It is found in the cell inner membrane. It carries out the reaction di-trans,octa-cis-undecaprenyl diphospho-N-acetyl-alpha-D-muramoyl-L-alanyl-D-glutamyl-meso-2,6-diaminopimeloyl-D-alanyl-D-alanine + UDP-N-acetyl-alpha-D-glucosamine = di-trans,octa-cis-undecaprenyl diphospho-[N-acetyl-alpha-D-glucosaminyl-(1-&gt;4)]-N-acetyl-alpha-D-muramoyl-L-alanyl-D-glutamyl-meso-2,6-diaminopimeloyl-D-alanyl-D-alanine + UDP + H(+). Its pathway is cell wall biogenesis; peptidoglycan biosynthesis. Its function is as follows. Cell wall formation. Catalyzes the transfer of a GlcNAc subunit on undecaprenyl-pyrophosphoryl-MurNAc-pentapeptide (lipid intermediate I) to form undecaprenyl-pyrophosphoryl-MurNAc-(pentapeptide)GlcNAc (lipid intermediate II). The sequence is that of UDP-N-acetylglucosamine--N-acetylmuramyl-(pentapeptide) pyrophosphoryl-undecaprenol N-acetylglucosamine transferase from Campylobacter jejuni subsp. jejuni serotype O:2 (strain ATCC 700819 / NCTC 11168).